The following is a 365-amino-acid chain: Peptide chain release factor 2 (365 aa).

An N5-methylglutamine modification is found at glutamine 252.

Belongs to the prokaryotic/mitochondrial release factor family. Methylated by PrmC. Methylation increases the termination efficiency of RF2.

The protein resides in the cytoplasm. In terms of biological role, peptide chain release factor 2 directs the termination of translation in response to the peptide chain termination codons UGA and UAA. In Proteus mirabilis (strain HI4320), this protein is Peptide chain release factor 2.